Here is a 259-residue protein sequence, read N- to C-terminus: Thiazole synthase (259 aa).

Lys99 acts as the Schiff-base intermediate with DXP in catalysis. 1-deoxy-D-xylulose 5-phosphate is bound by residues Gly160, 186–187, and 208–209; these read AG and NT.

It belongs to the ThiG family. As to quaternary structure, homotetramer. Forms heterodimers with either ThiH or ThiS.

Its subcellular location is the cytoplasm. The catalysed reaction is [ThiS sulfur-carrier protein]-C-terminal-Gly-aminoethanethioate + 2-iminoacetate + 1-deoxy-D-xylulose 5-phosphate = [ThiS sulfur-carrier protein]-C-terminal Gly-Gly + 2-[(2R,5Z)-2-carboxy-4-methylthiazol-5(2H)-ylidene]ethyl phosphate + 2 H2O + H(+). The protein operates within cofactor biosynthesis; thiamine diphosphate biosynthesis. In terms of biological role, catalyzes the rearrangement of 1-deoxy-D-xylulose 5-phosphate (DXP) to produce the thiazole phosphate moiety of thiamine. Sulfur is provided by the thiocarboxylate moiety of the carrier protein ThiS. In vitro, sulfur can be provided by H(2)S. In Porphyromonas gingivalis (strain ATCC 33277 / DSM 20709 / CIP 103683 / JCM 12257 / NCTC 11834 / 2561), this protein is Thiazole synthase.